Reading from the N-terminus, the 618-residue chain is Transport protein particle subunit trs85-2 (618 aa).

Belongs to the TRS85 family. As to quaternary structure, part of the multisubunit TRAPP (transport protein particle) complexes I and II.

It is found in the golgi apparatus. The protein resides in the cis-Golgi network. In terms of biological role, component of the TRAPP I and TRAPP II complexes. TRAPP I plays a key role in the late stages of endoplasmic reticulum to Golgi traffic. TRAPP II seems to play a role in intra-Golgi transport. Has a role late in meiosis following DNA replication. In Schizosaccharomyces pombe (strain 972 / ATCC 24843) (Fission yeast), this protein is Transport protein particle subunit trs85-2 (trs85-2).